The sequence spans 390 residues: Succinyl-diaminopimelate desuccinylase (390 aa).

His74 serves as a coordination point for Zn(2+). Asp76 is a catalytic residue. Residue Asp107 participates in Zn(2+) binding. Glu140 serves as the catalytic Proton acceptor. 3 residues coordinate Zn(2+): Glu141, Glu169, and His363.

The protein belongs to the peptidase M20A family. DapE subfamily. In terms of assembly, homodimer. The cofactor is Zn(2+). Requires Co(2+) as cofactor.

It carries out the reaction N-succinyl-(2S,6S)-2,6-diaminopimelate + H2O = (2S,6S)-2,6-diaminopimelate + succinate. It participates in amino-acid biosynthesis; L-lysine biosynthesis via DAP pathway; LL-2,6-diaminopimelate from (S)-tetrahydrodipicolinate (succinylase route): step 3/3. Catalyzes the hydrolysis of N-succinyl-L,L-diaminopimelic acid (SDAP), forming succinate and LL-2,6-diaminopimelate (DAP), an intermediate involved in the bacterial biosynthesis of lysine and meso-diaminopimelic acid, an essential component of bacterial cell walls. This is Succinyl-diaminopimelate desuccinylase from Bartonella quintana (strain Toulouse) (Rochalimaea quintana).